Reading from the N-terminus, the 319-residue chain is tRNA uridine(34) hydroxylase (319 aa).

The Rhodanese domain occupies 127 to 221 (KQEDTVIIDA…YGKDPEVQGE (95 aa)). Residue C181 is the Cysteine persulfide intermediate of the active site.

Belongs to the TrhO family.

It catalyses the reaction uridine(34) in tRNA + AH2 + O2 = 5-hydroxyuridine(34) in tRNA + A + H2O. Functionally, catalyzes oxygen-dependent 5-hydroxyuridine (ho5U) modification at position 34 in tRNAs. This is tRNA uridine(34) hydroxylase from Bacillus cereus (strain B4264).